The sequence spans 130 residues: Cytochrome c oxidase subunit 13, mitochondrial (130 aa).

A mitochondrion-targeting transit peptide spans 1-31 (MSMMNRNIGFLSRTLKTSVPKRAGLLSFRAY). Residues 32-61 (SNEAKVNWLEEVQAEEEHAKRSSEFWKKVT) lie on the Mitochondrial matrix side of the membrane. Residues 62-80 (YYIGGPALILASANAYYIY) form a helical membrane-spanning segment. The Mitochondrial intermembrane portion of the chain corresponds to 81 to 130 (CKHQEHAKHVEDTDPGYSFENLRFKKYPWGDGSKTLFWNDKVNHLKKDDE).

Belongs to the cytochrome c oxidase subunit 6A family. As to quaternary structure, component of the cytochrome c oxidase (complex IV, CIV), a multisubunit enzyme composed of a catalytic core of 3 subunits and several supernumerary subunits. The complex exists as a monomer or a dimer and forms supercomplexes (SCs) in the inner mitochondrial membrane with ubiquinol-cytochrome c oxidoreductase (cytochrome b-c1 complex, complex III, CIII).

The protein localises to the mitochondrion inner membrane. It participates in energy metabolism; oxidative phosphorylation. Component of the cytochrome c oxidase, the last enzyme in the mitochondrial electron transport chain which drives oxidative phosphorylation. The respiratory chain contains 3 multisubunit complexes succinate dehydrogenase (complex II, CII), ubiquinol-cytochrome c oxidoreductase (cytochrome b-c1 complex, complex III, CIII) and cytochrome c oxidase (complex IV, CIV), that cooperate to transfer electrons derived from NADH and succinate to molecular oxygen, creating an electrochemical gradient over the inner membrane that drives transmembrane transport and the ATP synthase. Cytochrome c oxidase is the component of the respiratory chain that catalyzes the reduction of oxygen to water. Electrons originating from reduced cytochrome c in the intermembrane space (IMS) are transferred via the dinuclear copper A center (CU(A)) of subunit 2 and heme A of subunit 1 to the active site in subunit 1, a binuclear center (BNC) formed by heme A3 and copper B (CU(B)). The BNC reduces molecular oxygen to 2 water molecules unsing 4 electrons from cytochrome c in the IMS and 4 protons from the mitochondrial matrix. This is Cytochrome c oxidase subunit 13, mitochondrial (cox13) from Schizosaccharomyces pombe (strain 972 / ATCC 24843) (Fission yeast).